We begin with the raw amino-acid sequence, 172 residues long: Large ribosomal subunit protein uL10 (172 aa).

The protein belongs to the universal ribosomal protein uL10 family. As to quaternary structure, part of the ribosomal stalk of the 50S ribosomal subunit. The N-terminus interacts with L11 and the large rRNA to form the base of the stalk. The C-terminus forms an elongated spine to which L12 dimers bind in a sequential fashion forming a multimeric L10(L12)X complex.

Its function is as follows. Forms part of the ribosomal stalk, playing a central role in the interaction of the ribosome with GTP-bound translation factors. The sequence is that of Large ribosomal subunit protein uL10 (rplJ) from Chlamydia trachomatis serovar D (strain ATCC VR-885 / DSM 19411 / UW-3/Cx).